The sequence spans 323 residues: Arginase (323 aa).

Mn(2+)-binding residues include His-119, Asp-142, His-144, and Asp-146. Substrate is bound by residues 144–148 (HADIN), 155–157 (SKN), and Asp-198. Residues Asp-247 and Asp-249 each contribute to the Mn(2+) site. Thr-261 and Glu-292 together coordinate substrate.

The protein belongs to the arginase family. In terms of assembly, homotrimer. Mn(2+) is required as a cofactor.

It carries out the reaction L-arginine + H2O = urea + L-ornithine. It functions in the pathway nitrogen metabolism; urea cycle; L-ornithine and urea from L-arginine: step 1/1. This Schizosaccharomyces pombe (strain 972 / ATCC 24843) (Fission yeast) protein is Arginase (car1).